Reading from the N-terminus, the 176-residue chain is NAD(P)H-quinone oxidoreductase subunit 6, chloroplastic (176 aa).

5 helical membrane passes run 10–30, 32–52, 61–81, 92–112, and 152–172; these read FLLV…VLLP, PIFS…LYIL, AQLL…VMFM, LWTV…FSLL, and FFLP…GAIS.

It belongs to the complex I subunit 6 family. In terms of assembly, NDH is composed of at least 16 different subunits, 5 of which are encoded in the nucleus.

The protein resides in the plastid. The protein localises to the chloroplast thylakoid membrane. It carries out the reaction a plastoquinone + NADH + (n+1) H(+)(in) = a plastoquinol + NAD(+) + n H(+)(out). It catalyses the reaction a plastoquinone + NADPH + (n+1) H(+)(in) = a plastoquinol + NADP(+) + n H(+)(out). Its function is as follows. NDH shuttles electrons from NAD(P)H:plastoquinone, via FMN and iron-sulfur (Fe-S) centers, to quinones in the photosynthetic chain and possibly in a chloroplast respiratory chain. The immediate electron acceptor for the enzyme in this species is believed to be plastoquinone. Couples the redox reaction to proton translocation, and thus conserves the redox energy in a proton gradient. The chain is NAD(P)H-quinone oxidoreductase subunit 6, chloroplastic (ndhG) from Lepidium virginicum (Virginia pepperweed).